The chain runs to 160 residues: uncharacterized protein (160 aa).

This is an uncharacterized protein from Galliformes (FAdV-1).